The following is a 449-amino-acid chain: Putative gustatory receptor 77a (449 aa).

The Cytoplasmic portion of the chain corresponds to 1–27; sequence MPLPLGDPLALAVSPQLGYIRITAMPR. The chain crosses the membrane as a helical span at residues 28–50; it reads WLQLPGMSALGILYSLTRVFGLM. Topologically, residues 51–70 are extracellular; sequence ATANWSPRGIKRVRQSLYLR. A helical transmembrane segment spans residues 71 to 93; sequence IHGCVMLIFVGCFSPFAFWCIFQ. Topologically, residues 94-102 are cytoplasmic; it reads RMAFLRQNR. The helical transmembrane segment at 103-125 threads the bilayer; it reads ILLMIGFNRYVLLLVCAFMTLWI. Topologically, residues 126–205 are extracellular; that stretch reads HCFKQAEIIG…VRRNFMYACS (80 aa). Residues 206–228 traverse the membrane as a helical segment; that stretch reads LVFVSVCQAILQLSLGMYTMAIL. Residues 229–298 lie on the Cytoplasmic side of the membrane; it reads FLGHLVRHSN…LLKLHRSICS (70 aa). The helical transmembrane segment at 299 to 321 threads the bilayer; sequence LCAVQAVCFLGFVPLECTIHLFF. The Extracellular segment spans residues 322-340; it reads TYFMKYSKFILRKYGRSFP. Residues 341–363 form a helical membrane-spanning segment; the sequence is LNYFAIAFLVGLFTNLLLVILPT. Over 364 to 420 the chain is Cytoplasmic; sequence YYSERRFNCTREIIKGGGLAFPSRITVKQLRHTMHFYGLYLKNVEHVFAVSACGLFK. A helical transmembrane segment spans residues 421–443; the sequence is LNNAILFCIVGAILEYLMILIQF. Residues 444–449 lie on the Extracellular side of the membrane; sequence DKVLNK.

The protein belongs to the insect chemoreceptor superfamily. Gustatory receptor (GR) family. Gr77a subfamily. In larvae, is expressed in dorsal pharyngeal sense organ.

The protein localises to the cell membrane. Functionally, probable gustatory receptor which mediates acceptance or avoidance behavior, depending on its substrates. In Drosophila melanogaster (Fruit fly), this protein is Putative gustatory receptor 77a (Gr77a).